The sequence spans 289 residues: Pantothenate synthetase (289 aa).

33-40 (MGYLHEGH) serves as a coordination point for ATP. His40 acts as the Proton donor in catalysis. Residue Gln70 participates in (R)-pantoate binding. Residue Gln70 coordinates beta-alanine. Position 157 to 160 (157 to 160 (GEKD)) interacts with ATP. A (R)-pantoate-binding site is contributed by Gln163. ATP-binding positions include Val186 and 194–197 (LSSR).

This sequence belongs to the pantothenate synthetase family. As to quaternary structure, homodimer.

The protein localises to the cytoplasm. The enzyme catalyses (R)-pantoate + beta-alanine + ATP = (R)-pantothenate + AMP + diphosphate + H(+). It participates in cofactor biosynthesis; (R)-pantothenate biosynthesis; (R)-pantothenate from (R)-pantoate and beta-alanine: step 1/1. In terms of biological role, catalyzes the condensation of pantoate with beta-alanine in an ATP-dependent reaction via a pantoyl-adenylate intermediate. In Anaeromyxobacter dehalogenans (strain 2CP-C), this protein is Pantothenate synthetase.